The following is a 326-amino-acid chain: Phenylalanine--tRNA ligase alpha subunit (326 aa).

Residue glutamate 251 participates in Mg(2+) binding.

This sequence belongs to the class-II aminoacyl-tRNA synthetase family. Phe-tRNA synthetase alpha subunit type 1 subfamily. As to quaternary structure, tetramer of two alpha and two beta subunits. Mg(2+) is required as a cofactor.

It is found in the cytoplasm. It catalyses the reaction tRNA(Phe) + L-phenylalanine + ATP = L-phenylalanyl-tRNA(Phe) + AMP + diphosphate + H(+). The polypeptide is Phenylalanine--tRNA ligase alpha subunit (Alteromonas mediterranea (strain DSM 17117 / CIP 110805 / LMG 28347 / Deep ecotype)).